The chain runs to 173 residues: Helix-loop-helix protein lin-22 (173 aa).

Residues 21–34 (KKIKNKPLMEKKRR) form a basic motif region. The bHLH domain maps to 21–78 (KKIKNKPLMEKKRRARINKSLSQLKQILIQDEHKNSIQHSKWEKADILEMAVEYLQQL). The helix-loop-helix motif stretch occupies residues 35–78 (ARINKSLSQLKQILIQDEHKNSIQHSKWEKADILEMAVEYLQQL). The span at 83–95 (PCSLSPSTSSIST) shows a compositional bias: low complexity. A disordered region spans residues 83–102 (PCSLSPSTSSISTPPTPKEE).

In terms of tissue distribution, expressed mostly in the seam (stem) cells and hypodermis (hyp7), but also to a lesser extent in the intestine.

The protein resides in the nucleus. In terms of biological role, probable transcription factor. During development, required for cell fate specification, probably by promoting or repressing expression of genes involved in specific cell fate. Involved in specifying lineages derived from the epidermal stem cells of the lateral ectoderm, known as seam cells. Modulates symmetric divisions of seam cells, perhaps in concert with the Wnt signaling pathway. May repress expression of homeobox genes mab-5, egl-5 and lin-39. This is Helix-loop-helix protein lin-22 from Caenorhabditis elegans.